We begin with the raw amino-acid sequence, 65 residues long: Small ribosomal subunit protein eS27 (65 aa).

The Zn(2+) site is built by cysteine 20, cysteine 23, cysteine 39, and cysteine 42. The segment at 20–42 adopts a C4-type zinc-finger fold; sequence CIDCGNEQIVFSNPATTVRCLVC.

This sequence belongs to the eukaryotic ribosomal protein eS27 family. Part of the 30S ribosomal subunit. The cofactor is Zn(2+).

The chain is Small ribosomal subunit protein eS27 from Thermococcus onnurineus (strain NA1).